The sequence spans 222 residues: CASP-like protein 1E1 (222 aa).

At 1 to 59 (MEASRVKPGFNGVGMAAGSVNGSSRRPGPGLGYGYGYYMGSGAAAGGSGRAAQAPVDGC) the chain is on the cytoplasmic side. Residues 60–80 (SVALRVFVVASTLVSAVVMGV) form a helical membrane-spanning segment. Residues 81-110 (DRQTRTIQITITDALPPLEVPLTANWSYSS) lie on the Extracellular side of the membrane. Asparagine 105 carries N-linked (GlcNAc...) asparagine glycosylation. A helical transmembrane segment spans residues 111-131 (AFVYFVVANAMVCLFSAAALA). Residues 132-146 (ACRSRAAMVPVMVGD) lie on the Cytoplasmic side of the membrane. Residues 147 to 167 (LLALALLYSAVGAAAEFGILG) form a helical membrane-spanning segment. Over 168–189 (ERGNSHVRWAKVCNVYGRFCDR) the chain is Extracellular. Residues 190 to 210 (AMAAVIVSLIGAFANLVLLML) form a helical membrane-spanning segment. Residues 211 to 222 (NILTIHKSSSYY) lie on the Cytoplasmic side of the membrane.

This sequence belongs to the Casparian strip membrane proteins (CASP) family. Homodimer and heterodimers.

It is found in the cell membrane. This chain is CASP-like protein 1E1, found in Sorghum bicolor (Sorghum).